Reading from the N-terminus, the 31-residue chain is Cytochrome b6-f complex subunit 6 (31 aa).

A helical membrane pass occupies residues 3 to 23 (TITSYFGFLLAALTITPALFI).

The protein belongs to the PetL family. As to quaternary structure, the 4 large subunits of the cytochrome b6-f complex are cytochrome b6, subunit IV (17 kDa polypeptide, PetD), cytochrome f and the Rieske protein, while the 4 small subunits are PetG, PetL, PetM and PetN. The complex functions as a dimer.

The protein resides in the plastid. It is found in the chloroplast thylakoid membrane. In terms of biological role, component of the cytochrome b6-f complex, which mediates electron transfer between photosystem II (PSII) and photosystem I (PSI), cyclic electron flow around PSI, and state transitions. PetL is important for photoautotrophic growth as well as for electron transfer efficiency and stability of the cytochrome b6-f complex. The chain is Cytochrome b6-f complex subunit 6 from Zea mays (Maize).